The sequence spans 301 residues: Mitochondrial import receptor subunit TOM40 homolog (301 aa).

The segment covering M1–G19 has biased composition (polar residues). Residues M1 to S20 are disordered.

The protein belongs to the Tom40 family. Forms part of the preprotein translocase complex of the outer mitochondrial membrane (TOM complex). Interacts with mitochondrial targeting sequences. Ubiquitously expressed, but highly expressed in the pharyngeal muscles, the nerve ring, the intestine, gonadal sheath and in the tail hypodermis.

The protein localises to the mitochondrion outer membrane. Functionally, channel-forming protein essential for import of protein precursors into mitochondria. Specifically required for nnt-1 accumulation in the mitochondria and may be involved in the secretion of daf-28/insulin from the mitochondria. Required for embryonic and larval development. The protein is Mitochondrial import receptor subunit TOM40 homolog of Caenorhabditis elegans.